We begin with the raw amino-acid sequence, 529 residues long: Bifunctional purine biosynthesis protein PurH (529 aa).

An MGS-like domain is found at 1-148 (MQQRRPIRRA…KNHKDVAIVV (148 aa)).

This sequence belongs to the PurH family.

The catalysed reaction is (6R)-10-formyltetrahydrofolate + 5-amino-1-(5-phospho-beta-D-ribosyl)imidazole-4-carboxamide = 5-formamido-1-(5-phospho-D-ribosyl)imidazole-4-carboxamide + (6S)-5,6,7,8-tetrahydrofolate. It catalyses the reaction IMP + H2O = 5-formamido-1-(5-phospho-D-ribosyl)imidazole-4-carboxamide. Its pathway is purine metabolism; IMP biosynthesis via de novo pathway; 5-formamido-1-(5-phospho-D-ribosyl)imidazole-4-carboxamide from 5-amino-1-(5-phospho-D-ribosyl)imidazole-4-carboxamide (10-formyl THF route): step 1/1. It functions in the pathway purine metabolism; IMP biosynthesis via de novo pathway; IMP from 5-formamido-1-(5-phospho-D-ribosyl)imidazole-4-carboxamide: step 1/1. The polypeptide is Bifunctional purine biosynthesis protein PurH (Yersinia enterocolitica serotype O:8 / biotype 1B (strain NCTC 13174 / 8081)).